The primary structure comprises 219 residues: Large ribosomal subunit protein uL3 (219 aa).

The protein belongs to the universal ribosomal protein uL3 family. In terms of assembly, part of the 50S ribosomal subunit. Forms a cluster with proteins L14 and L19.

Its function is as follows. One of the primary rRNA binding proteins, it binds directly near the 3'-end of the 23S rRNA, where it nucleates assembly of the 50S subunit. This Salinispora arenicola (strain CNS-205) protein is Large ribosomal subunit protein uL3.